A 106-amino-acid polypeptide reads, in one-letter code: Nucleoid-associated protein MCCL_1934 (106 aa).

The disordered stretch occupies residues 1–34 (MRGGGNMQQMMKQMQKMQKKMAEEQEKLKEERIE). The span at 7-16 (MQQMMKQMQK) shows a compositional bias: low complexity. A compositionally biased stretch (basic and acidic residues) spans 20-34 (KMAEEQEKLKEERIE).

It belongs to the YbaB/EbfC family. Homodimer.

The protein resides in the cytoplasm. It is found in the nucleoid. In terms of biological role, binds to DNA and alters its conformation. May be involved in regulation of gene expression, nucleoid organization and DNA protection. The polypeptide is Nucleoid-associated protein MCCL_1934 (Macrococcus caseolyticus (strain JCSC5402) (Macrococcoides caseolyticum)).